Consider the following 283-residue polypeptide: Elongation factor Ts (283 aa).

The involved in Mg(2+) ion dislocation from EF-Tu stretch occupies residues 80-83 (TDFV).

The protein belongs to the EF-Ts family.

Its subcellular location is the cytoplasm. Its function is as follows. Associates with the EF-Tu.GDP complex and induces the exchange of GDP to GTP. It remains bound to the aminoacyl-tRNA.EF-Tu.GTP complex up to the GTP hydrolysis stage on the ribosome. The polypeptide is Elongation factor Ts (Salmonella agona (strain SL483)).